The primary structure comprises 179 residues: Large ribosomal subunit protein uL6 (179 aa).

Belongs to the universal ribosomal protein uL6 family. As to quaternary structure, part of the 50S ribosomal subunit.

Its function is as follows. This protein binds to the 23S rRNA, and is important in its secondary structure. It is located near the subunit interface in the base of the L7/L12 stalk, and near the tRNA binding site of the peptidyltransferase center. This Koribacter versatilis (strain Ellin345) protein is Large ribosomal subunit protein uL6.